Here is a 186-residue protein sequence, read N- to C-terminus: UPF0301 protein Tgr7_2910 (186 aa).

The protein belongs to the UPF0301 (AlgH) family.

In Thioalkalivibrio sulfidiphilus (strain HL-EbGR7), this protein is UPF0301 protein Tgr7_2910.